We begin with the raw amino-acid sequence, 265 residues long: Transcription factor BHLH089 (265 aa).

A disordered region spans residues 1–132 (MDPAPTLAAE…PPPPEPPKQD (132 aa)). Composition is skewed to gly residues over residues 17 to 29 (LGGGGGGGGGGRG) and 44 to 53 (SRGGGGGGGA). The span at 95–105 (SKSSGDNSSLR) shows a compositional bias: polar residues. The tract at residues 142–155 (QATDSHSLAERARR) is basic motif; degenerate. The region spanning 142 to 192 (QATDSHSLAERARREKISERMKILQDLVPGCNKVIGKASVLDEIINYIQAL) is the bHLH domain. Positions 156 to 192 (EKISERMKILQDLVPGCNKVIGKASVLDEIINYIQAL) are helix-loop-helix motif.

This sequence belongs to the bHLH protein family. As to quaternary structure, interacts with RSS3.

Its subcellular location is the nucleus. Its function is as follows. Transcription factor that may regulate jasmonate-regulated genes. The chain is Transcription factor BHLH089 from Oryza sativa subsp. japonica (Rice).